We begin with the raw amino-acid sequence, 135 residues long: Methylglyoxal synthase (135 aa).

The 135-residue stretch at 1 to 135 folds into the MGS-like domain; the sequence is MPKRRRIALI…AQPDPKEIHA (135 aa). Residues histidine 12, lysine 16, 38–41, and 58–59 contribute to the substrate site; these read TGTT and SG. The Proton donor/acceptor role is filled by aspartate 64. Histidine 91 serves as a coordination point for substrate.

This sequence belongs to the methylglyoxal synthase family.

The catalysed reaction is dihydroxyacetone phosphate = methylglyoxal + phosphate. Functionally, catalyzes the formation of methylglyoxal from dihydroxyacetone phosphate. The protein is Methylglyoxal synthase of Ralstonia nicotianae (strain ATCC BAA-1114 / GMI1000) (Ralstonia solanacearum).